The primary structure comprises 509 residues: Bifunctional purine biosynthesis protein PurH (509 aa).

One can recognise an MGS-like domain in the interval 1–144; sequence MKRALISVSD…KNYAAVTVVV (144 aa).

The protein belongs to the PurH family.

The enzyme catalyses (6R)-10-formyltetrahydrofolate + 5-amino-1-(5-phospho-beta-D-ribosyl)imidazole-4-carboxamide = 5-formamido-1-(5-phospho-D-ribosyl)imidazole-4-carboxamide + (6S)-5,6,7,8-tetrahydrofolate. The catalysed reaction is IMP + H2O = 5-formamido-1-(5-phospho-D-ribosyl)imidazole-4-carboxamide. Its pathway is purine metabolism; IMP biosynthesis via de novo pathway; 5-formamido-1-(5-phospho-D-ribosyl)imidazole-4-carboxamide from 5-amino-1-(5-phospho-D-ribosyl)imidazole-4-carboxamide (10-formyl THF route): step 1/1. It participates in purine metabolism; IMP biosynthesis via de novo pathway; IMP from 5-formamido-1-(5-phospho-D-ribosyl)imidazole-4-carboxamide: step 1/1. The polypeptide is Bifunctional purine biosynthesis protein PurH (Listeria monocytogenes serovar 1/2a (strain ATCC BAA-679 / EGD-e)).